Consider the following 612-residue polypeptide: Zinc metalloproteinase-disintegrin-like HV1 (612 aa).

An N-terminal signal peptide occupies residues 1–20 (MIQVLLVTICLAVFPYQGSS). Residues 21–188 (IILESGNVND…SIKEDSQSNL (168 aa)) constitute a propeptide that is removed on maturation. The 197-residue stretch at 200 to 396 (KYVKFFLVAD…NMPQCILKKP (197 aa)) folds into the Peptidase M12B domain. Residue Asn-219 is glycosylated (N-linked (GlcNAc...) asparagine). Disulfide bonds link Cys-311-Cys-391, Cys-351-Cys-375, and Cys-353-Cys-358. His-336 lines the Zn(2+) pocket. Glu-337 is an active-site residue. Positions 340 and 346 each coordinate Zn(2+). The Disintegrin domain occupies 404-489 (PPVCGNYFVE…AECTDRFQRN (86 aa)). Ca(2+)-binding residues include Val-406, Asn-409, Phe-411, Glu-413, Glu-416, and Asp-419. Intrachain disulfides connect Cys-407–Cys-436, Cys-418–Cys-431, Cys-420–Cys-426, Cys-430–Cys-453, Cys-444–Cys-450, Cys-449–Cys-475, Cys-462–Cys-482, Cys-469–Cys-500, Cys-493–Cys-505, Cys-512–Cys-562, Cys-527–Cys-573, Cys-540–Cys-550, Cys-557–Cys-599, and Cys-593–Cys-605. The short motif at 468-470 (ECD) is the D/ECD-tripeptide element. Ca(2+) contacts are provided by Asp-470, Met-471, Asp-473, Asp-484, and Arg-485. The N-linked (GlcNAc...) asparagine glycan is linked to Asn-502. N-linked (GlcNAc...) asparagine glycosylation is present at Asn-609.

It belongs to the venom metalloproteinase (M12B) family. P-III subfamily. P-IIIc sub-subfamily. Homodimer; disulfide-linked. Requires Zn(2+) as cofactor. Expressed by the venom gland.

The protein localises to the secreted. Its activity is regulated as follows. Inhibited by EDTA and EGTA. Its function is as follows. Snake venom zinc metalloproteinase-disintegrin-like that potently activates prothrombin (F2). Does not elicit any hemorrhagic response. Barely inhibits collagen-induced platelet aggregation. Hydrolyzes the alpha-chain of fibrin and fibrinogen (FGA), without affecting the Bbeta- and gamma-chains. Induces apoptosis in cultured vascular endothelial cells. In Protobothrops flavoviridis (Habu), this protein is Zinc metalloproteinase-disintegrin-like HV1.